A 329-amino-acid chain; its full sequence is Sex comb on midleg-like protein 1 (329 aa).

Phosphoserine occurs at positions 138 and 238. The region spanning W258 to K325 is the SAM domain.

This sequence belongs to the SCM family.

It is found in the nucleus. Putative Polycomb group (PcG) protein. PcG proteins act by forming multiprotein complexes, which are required to maintain the transcriptionally repressive state of homeotic genes throughout development. May be involved in spermatogenesis during sexual maturation. The protein is Sex comb on midleg-like protein 1 (SCML1) of Hoolock hoolock (Western hoolock gibbon).